A 190-amino-acid chain; its full sequence is MNFLLSWVHWSLALLLYLHHAKWSQAAPMAEGEHKTHEVVKFMDVYQRSYCRPIETLVDIFQEYPDEIEYIFKPSCVPLMRCGGCCNDEGLECVPTAEFNITMQIMRIKPHQSQHIGEMSFLQHSKCECRPKKDKARQENPCGPCSERRKHLFVQDPQTCKCSCKNTDSRCKARQLELNERTCRCDKPRR.

The first 26 residues, Met1–Ala26, serve as a signal peptide directing secretion. Intrachain disulfides connect Cys51/Cys93, Cys82/Cys127, and Cys86/Cys129. N-linked (GlcNAc...) asparagine glycosylation occurs at Asn100.

This sequence belongs to the PDGF/VEGF growth factor family. In terms of assembly, homodimer; disulfide-linked. Also found as heterodimer with PGF. Interacts with NRP1. Interacts with isoform 2 of BSG. Interacts with CD82; this interaction inhibits VEGFA-mediated signaling pathway.

The protein resides in the secreted. Functionally, growth factor active in angiogenesis, vasculogenesis and endothelial cell growth. Induces endothelial cell proliferation, promotes cell migration, inhibits apoptosis and induces permeabilization of blood vessels. Binds to the FLT1/VEGFR1 and KDR/VEGFR2 receptors, heparan sulfate and heparin. Binding to NRP1 receptor initiates a signaling pathway needed for motor neuron axon guidance and cell body migration, including for the caudal migration of facial motor neurons from rhombomere 4 to rhombomere 6 during embryonic development. Also binds the DEAR/FBXW7-AS1 receptor. This is Vascular endothelial growth factor A (VEGFA) from Equus caballus (Horse).